The following is a 225-amino-acid chain: Ribosomal RNA large subunit methyltransferase E (225 aa).

S-adenosyl-L-methionine-binding residues include glycine 76, tryptophan 78, aspartate 99, aspartate 115, and aspartate 139. The Proton acceptor role is filled by lysine 179.

This sequence belongs to the class I-like SAM-binding methyltransferase superfamily. RNA methyltransferase RlmE family.

It is found in the cytoplasm. The enzyme catalyses uridine(2552) in 23S rRNA + S-adenosyl-L-methionine = 2'-O-methyluridine(2552) in 23S rRNA + S-adenosyl-L-homocysteine + H(+). Functionally, specifically methylates the uridine in position 2552 of 23S rRNA at the 2'-O position of the ribose in the fully assembled 50S ribosomal subunit. The chain is Ribosomal RNA large subunit methyltransferase E from Afipia carboxidovorans (strain ATCC 49405 / DSM 1227 / KCTC 32145 / OM5) (Oligotropha carboxidovorans).